We begin with the raw amino-acid sequence, 92 residues long: MARSLKKNPFVANHSLRKIENLNIKKEKKIIVTWSRASTIVPAMIGHTIAVHNGKEHLPIYITDRMVGHKLGEFAPTLIPRGHAKSDNRSRR.

Belongs to the universal ribosomal protein uS19 family.

The protein resides in the plastid. It is found in the chloroplast. In terms of biological role, protein S19 forms a complex with S13 that binds strongly to the 16S ribosomal RNA. In Cycas taitungensis (Prince sago), this protein is Small ribosomal subunit protein uS19c.